Consider the following 501-residue polypeptide: Orsellinic acid/F9775 biosynthesis cluster protein D (501 aa).

The interval 137–189 (EVTPTTEDEDDEENESENDEEEGDVDLEEQEDDNGGRQSTTVTTSPGPSAPSV) is disordered. Residues 142–169 (TEDEDDEENESENDEEEGDVDLEEQEDD) are compositionally biased toward acidic residues. Positions 172–183 (GRQSTTVTTSPG) are enriched in polar residues.

In terms of biological role, part of the gene cluster that mediates the biosynthesis of orsellinic acid, as well as of the cathepsin K inhibitors F9775 A and F9775 B. The non-reducing polyketide synthase orsA produces orsellinic acid by condensing acetyl-CoA with 3 malonyl-CoA units. Further modifications by the decarboxylase orsB and the tyrosinase-like protein orsC lead to the production of F9775 A and F9775 B. The functions of orsD and orsE remain unclear since only orsB and orsC are required to convert orsellinic acid into F9775 A and F9775 B. This is Orsellinic acid/F9775 biosynthesis cluster protein D from Emericella nidulans (strain FGSC A4 / ATCC 38163 / CBS 112.46 / NRRL 194 / M139) (Aspergillus nidulans).